A 294-amino-acid chain; its full sequence is Transcription factor nsy-7 (294 aa).

2 disordered regions span residues 43 to 119 and 167 to 191; these read CNLR…TPDL and LRLP…DSPL. 2 stretches are compositionally biased toward polar residues: residues 52-63 and 81-115; these read DQPTTSSNSVKE and RRQS…SNDP. The homeobox; atypical DNA-binding region spans 192 to 232; sequence QTRMKGWQREYIKEVIKDSHYPTEEELRDIEQKCDLSRKQI. A disordered region spans residues 238–274; that stretch reads KRLTNPNRKPRVNHHDEKRKEQEERDSLADPDDDMIN. A compositionally biased stretch (basic and acidic residues) spans 250–265; it reads NHHDEKRKEQEERDSL.

In terms of tissue distribution, expressed widely, including gut, the amphid sheath glial cells, and head and tail neurons including AWC, ASE, and ASH. Expressed in AWC (ON) olfactory neuron but not AWC (OFF).

It is found in the nucleus. Functionally, transcriptional regulator which binds DNA consensus sequence 5'-CCTTAAC-3'. Plays a role in establishing and maintaining asymmetric cell fates in chemosensory AWC neurons during larval neuronal development. This is achieved by repressing the expression of multiple AWC (OFF) genes, including srsx-3 and hlh-11 in the AWC (ON) neuron. Activates expression of sox-2 in the AWC (ON) neuron. The chain is Transcription factor nsy-7 from Caenorhabditis elegans.